The primary structure comprises 240 residues: Cilia- and flagella-associated protein 77 (240 aa).

Belongs to the CFAP77 family.

Its subcellular location is the cytoplasm. The protein localises to the cytoskeleton. It is found in the cilium axoneme. It localises to the flagellum axoneme. Its function is as follows. Microtubule inner protein (MIP) part of the dynein-decorated doublet microtubules (DMTs) in cilia axoneme, which is required for motile cilia beating. The protein is Cilia- and flagella-associated protein 77 of Danio rerio (Zebrafish).